The chain runs to 84 residues: Small ribosomal subunit protein bS16 (84 aa).

It belongs to the bacterial ribosomal protein bS16 family.

This chain is Small ribosomal subunit protein bS16, found in Delftia acidovorans (strain DSM 14801 / SPH-1).